Here is a 259-residue protein sequence, read N- to C-terminus: Indole-3-glycerol phosphate synthase (259 aa).

It belongs to the TrpC family.

It carries out the reaction 1-(2-carboxyphenylamino)-1-deoxy-D-ribulose 5-phosphate + H(+) = (1S,2R)-1-C-(indol-3-yl)glycerol 3-phosphate + CO2 + H2O. It participates in amino-acid biosynthesis; L-tryptophan biosynthesis; L-tryptophan from chorismate: step 4/5. The protein is Indole-3-glycerol phosphate synthase of Dehalococcoides mccartyi (strain ATCC BAA-2266 / KCTC 15142 / 195) (Dehalococcoides ethenogenes (strain 195)).